Consider the following 179-residue polypeptide: Hypoxanthine-guanine phosphoribosyltransferase (179 aa).

Diphosphate contacts are provided by lysine 42 and glycine 43. Positions 98 and 99 each coordinate Mg(2+). Glutamate 102 functions as the Proton acceptor in the catalytic mechanism. GMP contacts are provided by residues lysine 130, 151 to 152 (FV), and aspartate 158. Residue arginine 164 coordinates diphosphate.

This sequence belongs to the purine/pyrimidine phosphoribosyltransferase family. It depends on Mg(2+) as a cofactor.

The protein resides in the cytoplasm. It catalyses the reaction IMP + diphosphate = hypoxanthine + 5-phospho-alpha-D-ribose 1-diphosphate. It carries out the reaction GMP + diphosphate = guanine + 5-phospho-alpha-D-ribose 1-diphosphate. The protein operates within purine metabolism; IMP biosynthesis via salvage pathway; IMP from hypoxanthine: step 1/1. It participates in purine metabolism; GMP biosynthesis via salvage pathway; GMP from guanine: step 1/1. In terms of biological role, purine salvage pathway enzyme that catalyzes the transfer of the ribosyl-5-phosphate group from 5-phospho-alpha-D-ribose 1-diphosphate (PRPP) to the N9 position of the 6-oxopurines hypoxanthine and guanine to form the corresponding ribonucleotides IMP (inosine 5'-monophosphate) and GMP (guanosine 5'-monophosphate), with the release of PPi. This chain is Hypoxanthine-guanine phosphoribosyltransferase (hpt), found in Staphylococcus epidermidis (strain ATCC 35984 / DSM 28319 / BCRC 17069 / CCUG 31568 / BM 3577 / RP62A).